A 76-amino-acid polypeptide reads, in one-letter code: DNA-directed RNA polymerase subunit omega (76 aa).

This sequence belongs to the RNA polymerase subunit omega family. As to quaternary structure, the RNAP catalytic core consists of 2 alpha, 1 beta, 1 beta' and 1 omega subunit. When a sigma factor is associated with the core the holoenzyme is formed, which can initiate transcription.

The catalysed reaction is RNA(n) + a ribonucleoside 5'-triphosphate = RNA(n+1) + diphosphate. Its function is as follows. Promotes RNA polymerase assembly. Latches the N- and C-terminal regions of the beta' subunit thereby facilitating its interaction with the beta and alpha subunits. This chain is DNA-directed RNA polymerase subunit omega, found in Staphylococcus carnosus (strain TM300).